The following is a 644-amino-acid chain: Zinc finger protein 568 (644 aa).

Residues 48–119 form the KRAB domain; it reads VTFKDVAVDL…EEEMFGRHCP (72 aa). 15 C2H2-type zinc fingers span residues 222-244, 250-272, 278-300, 306-328, 334-356, 362-384, 390-412, 418-440, 446-468, 474-496, 502-524, 530-552, 558-580, 586-608, and 614-636; these read FKCN…ERIH, YECK…QKIH, YKCN…HRIH, YACK…ERIH, YECK…EKIH, YACN…MRSH, YKCN…MRSH, YVCS…MRNH, YECS…QRIH, YACT…EKIH, YHCN…EKIH, FKCN…VRSH, YECN…MRSH, and FECN…KRGH.

This sequence belongs to the krueppel C2H2-type zinc-finger protein family. As to quaternary structure, interacts with TRIM28.

It is found in the nucleus. Has transcriptional repression activity, partially through the recruitment of the corepressor TRIM28 but also has repression activity independently of this interaction. Essential during embryonic development, where it acts as a direct repressor of a placental-specific transcript of IGF2 in early development and regulates convergent extension movements required for axis elongation and tissue morphogenesis in all germ layers. Also important for normal morphogenesis of extraembryonic tissues including the yolk sac, extraembryonic mesoderm and placenta. May enhance proliferation or maintenance of neural stem cells. This Homo sapiens (Human) protein is Zinc finger protein 568 (ZNF568).